We begin with the raw amino-acid sequence, 212 residues long: Uracil phosphoribosyltransferase (212 aa).

Residues Arg-78, Arg-103, and 130–138 (DPMLATGGS) each bind 5-phospho-alpha-D-ribose 1-diphosphate. Uracil-binding positions include Ile-193 and 198–200 (GDA). Asp-199 is a binding site for 5-phospho-alpha-D-ribose 1-diphosphate.

This sequence belongs to the UPRTase family. Requires Mg(2+) as cofactor.

It catalyses the reaction UMP + diphosphate = 5-phospho-alpha-D-ribose 1-diphosphate + uracil. It functions in the pathway pyrimidine metabolism; UMP biosynthesis via salvage pathway; UMP from uracil: step 1/1. Its activity is regulated as follows. Allosterically activated by GTP. In terms of biological role, catalyzes the conversion of uracil and 5-phospho-alpha-D-ribose 1-diphosphate (PRPP) to UMP and diphosphate. The polypeptide is Uracil phosphoribosyltransferase (Bordetella petrii (strain ATCC BAA-461 / DSM 12804 / CCUG 43448)).